The chain runs to 536 residues: Arylsulfatase K (536 aa).

Residues 1–22 form the signal peptide; that stretch reads MLLLWVSVVAALALAVLAPGAG. 2 residues coordinate Ca(2+): D40 and C80. C80 acts as the Nucleophile in catalysis. C80 is modified (3-oxoalanine (Cys)). N108 carries N-linked (GlcNAc...) asparagine glycosylation. K128 lines the substrate pocket. Residues N166 and N193 are each glycosylated (N-linked (GlcNAc...) asparagine). Substrate is bound at residue H251. Residue N262 is glycosylated (N-linked (GlcNAc...) asparagine). Residues D313 and H314 each coordinate Ca(2+). Residues N375, N413, and N498 are each glycosylated (N-linked (GlcNAc...) asparagine).

Belongs to the sulfatase family. Ca(2+) serves as cofactor. Post-translationally, the conversion to 3-oxoalanine (also known as C-formylglycine, FGly), of a serine or cysteine residue in prokaryotes and of a cysteine residue in eukaryotes, is critical for catalytic activity. In terms of processing, the 75-kDa precursor undergoes proteolytic processing to yield a 23 kDa form. N-glycosylated with both high mannose and complex type sugars. As to expression, expressed at high levels in the placenta and pancreas. Expressed at intermediate levels in the lung, brain, heart, liver and kidney and at low levels in the muscle.

It is found in the secreted. The protein localises to the lysosome. It carries out the reaction an aryl sulfate + H2O = a phenol + sulfate + H(+). The enzyme catalyses Hydrolysis of the 2-sulfate groups of the 2-O-sulfo-D-glucuronate residues of chondroitin sulfate, heparin and heparitin sulfate.. Catalyzes the hydrolysis of pseudosubstrates such as p-nitrocatechol sulfate and p-nitrophenyl sulfate. Catalyzes the hydrolysis of the 2-sulfate groups of the 2-O-sulfo-D-glucuronate residues of chondroitin sulfate, heparin and heparitin sulfate. Acts selectively on 2-sulfoglucuronate and lacks activity against 2-sulfoiduronate. The protein is Arylsulfatase K (ARSK) of Homo sapiens (Human).